The primary structure comprises 605 residues: Ankyrin repeat domain-containing protein 13D (605 aa).

2 UIM domains span residues 482–501 (EDDD…AGTE) and 528–547 (EEQL…STES). A compositionally biased stretch (low complexity) spans 538–554 (QESLQLSTESRGPESPQ). The interval 538–605 (QESLQLSTES…RILQLSLTEH (68 aa)) is disordered. Residue Ser-552 is modified to Phosphoserine. Thr-556 carries the post-translational modification Phosphothreonine. The span at 564-575 (SFEEQLRLALEL) shows a compositional bias: low complexity. 2 consecutive UIM domains span residues 564–583 (SFEE…QEEL) and 589–605 (QEED…LTEH). Residues 576–589 (SSREQEELERRGQQ) are compositionally biased toward basic and acidic residues.

As to quaternary structure, interacts with EGFR (ubiquitinated); the interaction is direct and may regulate EGFR internalization.

The protein resides in the cell membrane. The protein localises to the late endosome. Ubiquitin-binding protein that specifically recognizes and binds 'Lys-63'-linked ubiquitin. Does not bind 'Lys-48'-linked ubiquitin. Positively regulates the internalization of ligand-activated EGFR by binding to the Ub moiety of ubiquitinated EGFR at the cell membrane. In Mus musculus (Mouse), this protein is Ankyrin repeat domain-containing protein 13D (Ankrd13d).